The chain runs to 269 residues: GTP cyclohydrolase FolE2 (269 aa).

This sequence belongs to the GTP cyclohydrolase IV family.

It carries out the reaction GTP + H2O = 7,8-dihydroneopterin 3'-triphosphate + formate + H(+). It functions in the pathway cofactor biosynthesis; 7,8-dihydroneopterin triphosphate biosynthesis; 7,8-dihydroneopterin triphosphate from GTP: step 1/1. Converts GTP to 7,8-dihydroneopterin triphosphate. This Burkholderia vietnamiensis (strain G4 / LMG 22486) (Burkholderia cepacia (strain R1808)) protein is GTP cyclohydrolase FolE2.